The primary structure comprises 383 residues: 23S rRNA (uracil(747)-C(5))-methyltransferase RlmC (383 aa).

Residues Cys-3, Cys-11, Cys-14, and Cys-89 each contribute to the [4Fe-4S] cluster site. S-adenosyl-L-methionine contacts are provided by Gln-214, Phe-243, Glu-270, and Asn-315. Catalysis depends on Cys-342, which acts as the Nucleophile.

The protein belongs to the class I-like SAM-binding methyltransferase superfamily. RNA M5U methyltransferase family. RlmC subfamily.

It carries out the reaction uridine(747) in 23S rRNA + S-adenosyl-L-methionine = 5-methyluridine(747) in 23S rRNA + S-adenosyl-L-homocysteine + H(+). In terms of biological role, catalyzes the formation of 5-methyl-uridine at position 747 (m5U747) in 23S rRNA. In Actinobacillus succinogenes (strain ATCC 55618 / DSM 22257 / CCUG 43843 / 130Z), this protein is 23S rRNA (uracil(747)-C(5))-methyltransferase RlmC.